We begin with the raw amino-acid sequence, 375 residues long: All-trans-retinol dehydrogenase [NAD(+)] ADH1B (375 aa).

Ser2 bears the N-acetylserine mark. Residue Ser23 is modified to Phosphoserine. Residue Tyr35 is modified to Phosphotyrosine. Zn(2+) is bound by residues Cys47, His68, Cys98, Cys101, Cys104, Cys112, and Cys175. NAD(+) contacts are provided by residues 200-205, Asp224, Lys229, 293-295, and Arg370; these read GLGGVG and VGV.

The protein belongs to the zinc-containing alcohol dehydrogenase family. Homodimer or heterodimer of closely related subunits. The cofactor is Zn(2+). As to expression, expressed in liver.

It is found in the cytoplasm. It carries out the reaction all-trans-retinol + NAD(+) = all-trans-retinal + NADH + H(+). The enzyme catalyses all-trans-4-hydroxyretinol + NAD(+) = all-trans-4-hydroxyretinal + NADH + H(+). The catalysed reaction is all-trans-4-oxoretinol + NAD(+) = all-trans-4-oxoretinal + NADH + H(+). Its function is as follows. Catalyzes the NAD-dependent oxidation of all-trans-retinol and its derivatives such as all-trans-4-hydroxyretinol and may participate in retinoid metabolism. In vitro can also catalyze the NADH-dependent reduction of all-trans-retinal and its derivatives such as all-trans-4-oxoretinal. Catalyzes in the oxidative direction with higher efficiency. Has the same affinity for all-trans-4-hydroxyretinol and all-trans-4-oxoretinal. The protein is All-trans-retinol dehydrogenase [NAD(+)] ADH1B of Papio hamadryas (Hamadryas baboon).